We begin with the raw amino-acid sequence, 326 residues long: Flap endonuclease 1 (326 aa).

The N-domain stretch occupies residues 1-100; sequence MGNAALRQLA…EEVQERRVAR (100 aa). Mg(2+) contacts are provided by Asp-28, Asp-82, Glu-154, Glu-156, Asp-175, Asp-177, and Asp-225. The I-domain stretch occupies residues 118 to 246; it reads AASRLEARTQ…TAISAINDHG (129 aa). Positions 318-326 are interaction with PCNA; it reads VQTGLDEWI.

The protein belongs to the XPG/RAD2 endonuclease family. FEN1 subfamily. As to quaternary structure, interacts with PCNA. PCNA stimulates the nuclease activity without altering cleavage specificity. It depends on Mg(2+) as a cofactor.

Its function is as follows. Structure-specific nuclease with 5'-flap endonuclease and 5'-3' exonuclease activities involved in DNA replication and repair. During DNA replication, cleaves the 5'-overhanging flap structure that is generated by displacement synthesis when DNA polymerase encounters the 5'-end of a downstream Okazaki fragment. Binds the unpaired 3'-DNA end and kinks the DNA to facilitate 5' cleavage specificity. Cleaves one nucleotide into the double-stranded DNA from the junction in flap DNA, leaving a nick for ligation. Also involved in the base excision repair (BER) pathway. Acts as a genome stabilization factor that prevents flaps from equilibrating into structures that lead to duplications and deletions. Also possesses 5'-3' exonuclease activity on nicked or gapped double-stranded DNA. The polypeptide is Flap endonuclease 1 (Haloquadratum walsbyi (strain DSM 16790 / HBSQ001)).